Consider the following 346-residue polypeptide: Phosphate acyltransferase (346 aa).

The protein belongs to the PlsX family. As to quaternary structure, homodimer. Probably interacts with PlsY.

The protein localises to the cytoplasm. The enzyme catalyses a fatty acyl-[ACP] + phosphate = an acyl phosphate + holo-[ACP]. Its pathway is lipid metabolism; phospholipid metabolism. Catalyzes the reversible formation of acyl-phosphate (acyl-PO(4)) from acyl-[acyl-carrier-protein] (acyl-ACP). This enzyme utilizes acyl-ACP as fatty acyl donor, but not acyl-CoA. This is Phosphate acyltransferase from Psychromonas ingrahamii (strain DSM 17664 / CCUG 51855 / 37).